A 102-amino-acid chain; its full sequence is Co-chaperonin GroES (102 aa).

This sequence belongs to the GroES chaperonin family. As to quaternary structure, heptamer of 7 subunits arranged in a ring. Interacts with the chaperonin GroEL.

The protein localises to the cytoplasm. Its function is as follows. Together with the chaperonin GroEL, plays an essential role in assisting protein folding. The GroEL-GroES system forms a nano-cage that allows encapsulation of the non-native substrate proteins and provides a physical environment optimized to promote and accelerate protein folding. GroES binds to the apical surface of the GroEL ring, thereby capping the opening of the GroEL channel. This chain is Co-chaperonin GroES, found in Streptomyces albus G.